Consider the following 505-residue polypeptide: 4-alpha-glucanotransferase (505 aa).

Belongs to the disproportionating enzyme family.

The protein resides in the cytoplasm. It carries out the reaction Transfers a segment of a (1-&gt;4)-alpha-D-glucan to a new position in an acceptor, which may be glucose or a (1-&gt;4)-alpha-D-glucan.. The chain is 4-alpha-glucanotransferase (malQ) from Streptococcus pneumoniae serotype 4 (strain ATCC BAA-334 / TIGR4).